A 425-amino-acid polypeptide reads, in one-letter code: Melibiose permease (425 aa).

At 1-13 (MNTTTCTHKDNPN) the chain is on the cytoplasmic side. The helical transmembrane segment at 14–34 (FWIFGLFFFLYFFIMATCFPF) threads the bilayer. The Periplasmic portion of the chain corresponds to 35–50 (LPIWLSDIIGLNKTHT). A helical transmembrane segment spans residues 51 to 71 (GIVFSCISLSAIAFQPVLGVI). Topologically, residues 72–80 (SDKLGLKKH) are cytoplasmic. The chain crosses the membrane as a helical span at residues 81-101 (LLWIISVLLFLFAPFFLYVFA). Residues 102–107 (PLLKTN) lie on the Periplasmic side of the membrane. The chain crosses the membrane as a helical span at residues 108-128 (IWLGALSGGLYIGFVFSAGSG). The Cytoplasmic portion of the chain corresponds to 129–149 (AIEAYIERVSRNSAFEYGKAR). The helical transmembrane segment at 150-170 (MFGCLGWGLCASTGGILFGID) threads the bilayer. Residue Pro171 is a topological domain, periplasmic. Residues 172 to 192 (SYVFWMGSAAALLLMLLLVVA) traverse the membrane as a helical segment. Topologically, residues 193–227 (KPKPNQTAQVMNALGANQPQITAKKVFNLFRQRRM) are cytoplasmic. Residues 228–248 (WMFILYVIGVACVYDVFDQQF) traverse the membrane as a helical segment. Residues 249-267 (ATFFKTFFATPQEGTRAFG) are Periplasmic-facing. The chain crosses the membrane as a helical span at residues 268–288 (FATTAGEICNAIIMFCSPWII). Residues 289-297 (NRIGAKNTL) lie on the Cytoplasmic side of the membrane. A helical transmembrane segment spans residues 298–318 (LIAGLIMATRIIGSSFATTAV). Residues 319 to 325 (EVIALKM) are Periplasmic-facing. Residues 326-346 (LHALEVPFLLVGAFKYITGVF) traverse the membrane as a helical segment. The Cytoplasmic portion of the chain corresponds to 347 to 353 (DTRLSAT). A helical membrane pass occupies residues 354-374 (IYLIGFQFAKQSAAIFLSAFA). At 375–385 (GNMYDRIGFQE) the chain is on the periplasmic side. Residues 386–406 (TYLMLGCFVLAITVVSAFTLS) traverse the membrane as a helical segment. At 407 to 425 (SRQEIAAAAGAAALTSQSR) the chain is on the cytoplasmic side.

This sequence belongs to the major facilitator superfamily. Oligosaccharide:H(+) symporter (OHS) (TC 2.A.1.5) family.

It is found in the cell inner membrane. Responsible for transport of melibiose into the cell, with the concomitant import of a proton (symport system). Can also transport lactose, and has weak activity with maltose. Cannot transport the analog methyl-1-thio-beta,D-galactopyranoside (TMG). The polypeptide is Melibiose permease (Enterobacter cloacae subsp. cloacae (strain ATCC 13047 / DSM 30054 / NBRC 13535 / NCTC 10005 / WDCM 00083 / NCDC 279-56)).